The following is a 215-amino-acid chain: 3-demethoxyubiquinol 3-hydroxylase (215 aa).

The Fe cation site is built by E64, E94, H97, E146, E178, and H181.

Belongs to the COQ7 family. The cofactor is Fe cation.

The protein resides in the cell membrane. It carries out the reaction a 5-methoxy-2-methyl-3-(all-trans-polyprenyl)benzene-1,4-diol + AH2 + O2 = a 3-demethylubiquinol + A + H2O. Its pathway is cofactor biosynthesis; ubiquinone biosynthesis. Catalyzes the hydroxylation of 2-nonaprenyl-3-methyl-6-methoxy-1,4-benzoquinol during ubiquinone biosynthesis. This chain is 3-demethoxyubiquinol 3-hydroxylase, found in Pseudomonas putida (strain GB-1).